The chain runs to 418 residues: Glutamyl-tRNA reductase (418 aa).

Substrate contacts are provided by residues Thr-49–Arg-52, Ser-109, Glu-114–Gln-116, and Gln-120. The active-site Nucleophile is the Cys-50. Residue Gly-189–Ile-194 participates in NADP(+) binding.

This sequence belongs to the glutamyl-tRNA reductase family. As to quaternary structure, homodimer.

The catalysed reaction is (S)-4-amino-5-oxopentanoate + tRNA(Glu) + NADP(+) = L-glutamyl-tRNA(Glu) + NADPH + H(+). Its pathway is porphyrin-containing compound metabolism; protoporphyrin-IX biosynthesis; 5-aminolevulinate from L-glutamyl-tRNA(Glu): step 1/2. Functionally, catalyzes the NADPH-dependent reduction of glutamyl-tRNA(Glu) to glutamate 1-semialdehyde (GSA). The polypeptide is Glutamyl-tRNA reductase (Cronobacter sakazakii (strain ATCC BAA-894) (Enterobacter sakazakii)).